A 420-amino-acid polypeptide reads, in one-letter code: Pre-mRNA-splicing factor RBM22 (420 aa).

Position 2 is an N-acetylalanine (Ala2). Phosphoserine is present on residues Ser4 and Ser102. Glycyl lysine isopeptide (Lys-Gly) (interchain with G-Cter in SUMO2) cross-links involve residues Lys139 and Lys149. The segment at 159 to 186 adopts a C3H1-type zinc-finger fold; sequence RNRPHICSFWVKGECKRGEECPYRHEKP. Lys212 is modified (N6-acetyllysine). One can recognise an RRM domain in the interval 232–305; it reads TTLYVGGLGD…RRLNVKWGRS (74 aa). Lys290 participates in a covalent cross-link: Glycyl lysine isopeptide (Lys-Gly) (interchain with G-Cter in SUMO2). Disordered stretches follow at residues 303-343 and 371-420; these read GRSQ…AAEE and IAPP…HSSP. Over residues 309–318 the composition is skewed to basic and acidic residues; sequence RGKEKEKDGT.

The protein belongs to the SLT11 family. As to quaternary structure, component of the pre-catalytic and catalytic spliceosome complexes. Component of the postcatalytic spliceosome P complex. Interacts with PDCD6; the interaction induces translocation of PDCD6 in the cytoplasm. Interacts with PPIL1.

The protein localises to the nucleus. Its subcellular location is the cytoplasm. Its function is as follows. Required for pre-mRNA splicing as component of the activated spliceosome. Involved in the first step of pre-mRNA splicing. Binds directly to the internal stem-loop (ISL) domain of the U6 snRNA and to the pre-mRNA intron near the 5' splice site during the activation and catalytic phases of the spliceosome cycle. Involved in both translocations of the nuclear SLU7 to the cytoplasm and the cytosolic calcium-binding protein PDCD6 to the nucleus upon cellular stress responses. The sequence is that of Pre-mRNA-splicing factor RBM22 (Rbm22) from Rattus norvegicus (Rat).